Here is a 142-residue protein sequence, read N- to C-terminus: Large ribosomal subunit protein uL11 (142 aa).

The protein belongs to the universal ribosomal protein uL11 family. In terms of assembly, part of the ribosomal stalk of the 50S ribosomal subunit. Interacts with L10 and the large rRNA to form the base of the stalk. L10 forms an elongated spine to which L12 dimers bind in a sequential fashion forming a multimeric L10(L12)X complex. In terms of processing, one or more lysine residues are methylated.

Forms part of the ribosomal stalk which helps the ribosome interact with GTP-bound translation factors. This Aeromonas hydrophila subsp. hydrophila (strain ATCC 7966 / DSM 30187 / BCRC 13018 / CCUG 14551 / JCM 1027 / KCTC 2358 / NCIMB 9240 / NCTC 8049) protein is Large ribosomal subunit protein uL11.